Reading from the N-terminus, the 590-residue chain is Neuronal PAS domain-containing protein 1 (590 aa).

One can recognise a bHLH domain in the interval 45–98 (QRKEKSRNAARSRRGKENLEFFELAKLLPLPGAISSQLDKASIVRLSVTYLRLR). Residues 135-207 (EQHLGGHILQ…LGLRTPTPGP (73 aa)) enclose the PAS 1 domain. The segment at 198-229 (LGLRTPTPGPPTPPSVSSSSSSSSSLADTPEI) is disordered. Low complexity predominate over residues 212–222 (SVSSSSSSSSS). The PAS 2 domain maps to 293–359 (APLAELPLHG…IRQSHVDLLD (67 aa)). Residues 365-408 (TGYYRWLQRAGGFVWLQSVATVAGSGKSPGEHHVLWVSHVLSQA) enclose the PAC domain. The interval 425–494 (ACEEASSPGP…SHPATPRPEF (70 aa)) is disordered. A compositionally biased stretch (pro residues) spans 433–442 (GPEPTEPEPP). A compositionally biased stretch (basic and acidic residues) spans 463-476 (IKVEPGPRETKGSE).

Efficient DNA binding requires dimerization with another bHLH protein. Interacts with ARNT; forms a heterodimer that binds core DNA sequence 5'-[AG]CGTG-3' within the hypoxia response element (HRE) leading to a transcriptional repressor on its target gene TH.

The protein resides in the nucleus. Functionally, may control regulatory pathways relevant to schizophrenia and to psychotic illness. May play a role in late central nervous system development by modulating EPO expression in response to cellular oxygen level. Forms a heterodimer that binds core DNA sequence 5'-TACGTG-3' within the hypoxia response element (HRE) leading to transcriptional repression on its target gene TH. The protein is Neuronal PAS domain-containing protein 1 (NPAS1) of Homo sapiens (Human).